Consider the following 324-residue polypeptide: Glucokinase (324 aa).

Residue 6 to 11 (IDIGGT) coordinates ATP.

Belongs to the bacterial glucokinase family.

The protein resides in the cytoplasm. The enzyme catalyses D-glucose + ATP = D-glucose 6-phosphate + ADP + H(+). The protein is Glucokinase of Zymomonas mobilis subsp. mobilis (strain ATCC 31821 / ZM4 / CP4).